The primary structure comprises 154 residues: Urease accessory protein UreE (154 aa).

Residues Pro-134 to Asp-154 form a disordered region. Basic residues predominate over residues Gly-143–Asp-154.

This sequence belongs to the UreE family.

It is found in the cytoplasm. Involved in urease metallocenter assembly. Binds nickel. Probably functions as a nickel donor during metallocenter assembly. The sequence is that of Urease accessory protein UreE from Alteromonas mediterranea (strain DSM 17117 / CIP 110805 / LMG 28347 / Deep ecotype).